The sequence spans 174 residues: Transcription antitermination protein NusB (174 aa).

A disordered region spans residues 1–28 (MVEPKKPFMRKPPPKTGDKKPGDRKANR). The span at 16–25 (TGDKKPGDRK) shows a compositional bias: basic and acidic residues.

The protein belongs to the NusB family.

In terms of biological role, involved in transcription antitermination. Required for transcription of ribosomal RNA (rRNA) genes. Binds specifically to the boxA antiterminator sequence of the ribosomal RNA (rrn) operons. The polypeptide is Transcription antitermination protein NusB (Rhodopseudomonas palustris (strain BisB5)).